The sequence spans 127 residues: Aspartate 1-decarboxylase (127 aa).

Serine 25 acts as the Schiff-base intermediate with substrate; via pyruvic acid in catalysis. A Pyruvic acid (Ser) modification is found at serine 25. Substrate is bound at residue threonine 57. The Proton donor role is filled by tyrosine 58. Substrate is bound at residue 73–75; sequence GSA.

The protein belongs to the PanD family. Heterooctamer of four alpha and four beta subunits. It depends on pyruvate as a cofactor. Is synthesized initially as an inactive proenzyme, which is activated by self-cleavage at a specific serine bond to produce a beta-subunit with a hydroxyl group at its C-terminus and an alpha-subunit with a pyruvoyl group at its N-terminus.

The protein localises to the cytoplasm. It catalyses the reaction L-aspartate + H(+) = beta-alanine + CO2. It participates in cofactor biosynthesis; (R)-pantothenate biosynthesis; beta-alanine from L-aspartate: step 1/1. Its function is as follows. Catalyzes the pyruvoyl-dependent decarboxylation of aspartate to produce beta-alanine. This Dechloromonas aromatica (strain RCB) protein is Aspartate 1-decarboxylase.